Here is a 610-residue protein sequence, read N- to C-terminus: Fimbrin (610 aa).

2 consecutive EF-hand domains span residues 7–42 and 43–78; these read SEIS…CGEK and VTGV…ARQH. The Ca(2+) site is built by aspartate 20, asparagine 22, aspartate 24, glutamine 26, glutamate 31, aspartate 56, aspartate 58, asparagine 60, serine 62, and glutamate 67. Actin-binding regions lie at residues 102–365 and 366–608; these read YSGS…NTHP and ALEP…QVEM. Calponin-homology (CH) domains follow at residues 116–232, 260–365, 379–488, and 501–608; these read DEEK…KIGL, LPVE…NTHP, TREE…RGHV, and PIAD…QVEM.

Functionally, binds to actin. In Dictyostelium discoideum (Social amoeba), this protein is Fimbrin (fimA).